We begin with the raw amino-acid sequence, 224 residues long: Uracil-DNA glycosylase 2 (224 aa).

Residue Asp64 is the Proton acceptor of the active site.

The protein belongs to the uracil-DNA glycosylase (UDG) superfamily. UNG family.

It is found in the cytoplasm. The catalysed reaction is Hydrolyzes single-stranded DNA or mismatched double-stranded DNA and polynucleotides, releasing free uracil.. Its function is as follows. Excises uracil residues from the DNA which can arise as a result of misincorporation of dUMP residues by DNA polymerase or due to deamination of cytosine. The polypeptide is Uracil-DNA glycosylase 2 (Listeria monocytogenes serovar 1/2a (strain ATCC BAA-679 / EGD-e)).